The chain runs to 348 residues: MKVIVDNKIPYIREAIEQIADEVIYAPGKDFTPELVQDADALIIRTRTRCDRSLLAGSKVKFIATATIGFDHIDTAYCREAGITWTNAPGCNSASVAQYIQSTLFILQQTRGMKLNQMTIGIVGVGNVGSKVADVARKLGIQVMLNDLPREEREESTMFASLKSIAEKCDIITFHVPLYKEGKYKTYHLADKHFFHSLKKGAVIMNTSRGEVIETEALLEALRSGILSDAVIDVWEHEPDIDLELLEKVIIGTPHIAGYSADGKANATRMSLEALCRFFRIETDYRITPPEPKNKLISTATYEEASLMIYDPRRDSDALKSHPGLFEQLRGDYPLRREEGAYRIVITK.

The substrate site is built by threonine 46 and threonine 67. Residue aspartate 147 coordinates NAD(+). The active site involves arginine 209. Aspartate 233 provides a ligand contact to NAD(+). Residue glutamate 238 is part of the active site. Residue histidine 255 is the Proton donor of the active site. Glycine 258 is an NAD(+) binding site. Residue tyrosine 259 coordinates substrate.

The protein belongs to the D-isomer specific 2-hydroxyacid dehydrogenase family. PdxB subfamily. Homodimer.

It is found in the cytoplasm. The catalysed reaction is 4-phospho-D-erythronate + NAD(+) = (R)-3-hydroxy-2-oxo-4-phosphooxybutanoate + NADH + H(+). Its pathway is cofactor biosynthesis; pyridoxine 5'-phosphate biosynthesis; pyridoxine 5'-phosphate from D-erythrose 4-phosphate: step 2/5. Catalyzes the oxidation of erythronate-4-phosphate to 3-hydroxy-2-oxo-4-phosphonooxybutanoate. The chain is Erythronate-4-phosphate dehydrogenase from Bacteroides fragilis (strain YCH46).